The primary structure comprises 430 residues: Aspartate aminotransferase, mitochondrial (430 aa).

The transit peptide at 1-28 (MALAMMIRNAASKRGMTPISGHFGGLRS) directs the protein to the mitochondrion. 3 residues coordinate L-aspartate: glycine 65, tryptophan 160, and asparagine 213. Lysine 277 bears the N6-(pyridoxal phosphate)lysine mark. Arginine 405 is a binding site for L-aspartate.

Belongs to the class-I pyridoxal-phosphate-dependent aminotransferase family. In terms of assembly, homodimer. The cofactor is pyridoxal 5'-phosphate.

It is found in the mitochondrion matrix. The catalysed reaction is L-aspartate + 2-oxoglutarate = oxaloacetate + L-glutamate. Its function is as follows. Amino acid aminotransferase important for the metabolism of amino acids and Krebs-cycle related organic acids. No activity with D-Asp or D-Ala as amino donors. In plants, it is involved in nitrogen metabolism and in aspects of carbon and energy metabolism. The chain is Aspartate aminotransferase, mitochondrial (ASP1) from Arabidopsis thaliana (Mouse-ear cress).